A 168-amino-acid polypeptide reads, in one-letter code: Cyanate hydratase (168 aa).

Residues Arg91, Glu94, and Ser117 contribute to the active site.

Belongs to the cyanase family.

It carries out the reaction cyanate + hydrogencarbonate + 3 H(+) = NH4(+) + 2 CO2. In terms of biological role, catalyzes the reaction of cyanate with bicarbonate to produce ammonia and carbon dioxide. In Arabidopsis thaliana (Mouse-ear cress), this protein is Cyanate hydratase.